A 1246-amino-acid polypeptide reads, in one-letter code: Myosin-1 (1246 aa).

Positions 1–41 (MGHSRRPVGGEKKSRGFGRSKAVADVGDGRQTGGKPQVKKA) are disordered. Residues 51-730 (IGVSDLTLLS…TLFALEAMRD (680 aa)) form the Myosin motor domain. 144–151 (GESGAGKT) contributes to the ATP binding site. Ser372 bears the Phosphoserine mark. An actin-binding region spans residues 419–501 (SIGILDIYGF…PGVFAALNDA (83 aa)). IQ domains follow at residues 734–754 (HNMA…RIEC) and 755–780 (AIRI…QGHK). The 189-residue stretch at 788–976 (RRRMSLLGSR…TIHTSAGEPP (189 aa)) folds into the TH1 domain. Positions 956-970 (GSSNVDTYKSSTIHT) are enriched in polar residues. Disordered stretches follow at residues 956 to 1080 (GSSN…PKKP) and 1127 to 1246 (WTPQ…DDEW). 2 stretches are compositionally biased toward pro residues: residues 1033 to 1045 (APQP…PVPQ) and 1065 to 1078 (APPP…PAPK). Positions 1077–1138 (PKKPMAKVLY…PQAYLEEQKA (62 aa)) constitute an SH3 domain. Low complexity-rich tracts occupy residues 1151-1166 (TPAT…AKAK) and 1214-1228 (NSAS…LAEA). Residues 1229–1240 (LRQRQEAMHGKQ) show a composition bias toward basic and acidic residues.

Belongs to the TRAFAC class myosin-kinesin ATPase superfamily. Myosin family. Phosphorylation of the TEDS site (Ser-372) is required for the polarization of the actin cytoskeleton. Phosphorylation probably activates the myosin-I ATPase activity.

The protein resides in the cytoplasm. It localises to the cytoskeleton. The protein localises to the actin patch. Type-I myosin implicated in the organization of the actin cytoskeleton. Required for proper actin cytoskeleton polarization. At the cell cortex, assembles in patch-like structures together with proteins from the actin-polymerizing machinery and promotes actin assembly. Functions as actin nucleation-promoting factor (NPF) for the Arp2/3 complex. Plays an important role in polarized growth, spore germination, hyphal morphogenesis, and septal wall formation. This chain is Myosin-1 (myoA), found in Aspergillus terreus (strain NIH 2624 / FGSC A1156).